A 245-amino-acid polypeptide reads, in one-letter code: NAD-dependent protein deacylase 1 (245 aa).

Positions 1–243 constitute a Deacetylase sirtuin-type domain; the sequence is MDEKLLKTIA…DELVRHVRKA (243 aa). NAD(+) is bound at residue 20–39; the sequence is GAGVSAESGIPTFRGKDGLW. Substrate-binding residues include Y64 and R67. 98 to 101 serves as a coordination point for NAD(+); sequence QNVD. Catalysis depends on H116, which acts as the Proton acceptor. 4 residues coordinate Zn(2+): C124, C127, C145, and C148. NAD(+)-binding positions include 185-187, 211-213, and A229; these read GTS and NPD.

The protein belongs to the sirtuin family. Class III subfamily. Zn(2+) serves as cofactor.

It is found in the cytoplasm. The enzyme catalyses N(6)-acetyl-L-lysyl-[protein] + NAD(+) + H2O = 2''-O-acetyl-ADP-D-ribose + nicotinamide + L-lysyl-[protein]. It carries out the reaction N(6)-succinyl-L-lysyl-[protein] + NAD(+) + H2O = 2''-O-succinyl-ADP-D-ribose + nicotinamide + L-lysyl-[protein]. In terms of biological role, NAD-dependent lysine deacetylase and desuccinylase that specifically removes acetyl and succinyl groups on target proteins. Modulates the activities of several proteins which are inactive in their acylated form. Deacetylates the N-terminal lysine residue of Alba, the major archaeal chromatin protein and that, in turn, increases Alba's DNA binding affinity, thereby repressing transcription. The sequence is that of NAD-dependent protein deacylase 1 from Archaeoglobus fulgidus (strain ATCC 49558 / DSM 4304 / JCM 9628 / NBRC 100126 / VC-16).